A 683-amino-acid chain; its full sequence is Amino acid transporter heavy chain SLC3A1 (683 aa).

Residues 1–10 (MNEDKDKRDS) are compositionally biased toward basic and acidic residues. The disordered stretch occupies residues 1–50 (MNEDKDKRDSIQMSMKGCRTNNGFVQNEDIQEQDPDSRDTPQSNAVSIPA). The Cytoplasmic portion of the chain corresponds to 1–86 (MNEDKDKRDS…ARYRVPREIL (86 aa)). S10 bears the Phosphoserine mark. Residues 87 to 107 (FWLTVVSVFLLIGATIAIIII) traverse the membrane as a helical; Signal-anchor for type II membrane protein segment. The Extracellular portion of the chain corresponds to 108–683 (SPKCLDWWQA…SVLDLLYSSC (576 aa)). N211 is a binding site for Ca(2+). N211, N238, and N258 each carry an N-linked (GlcNAc...) asparagine glycan. An intrachain disulfide couples C239 to C270. Ca(2+) contacts are provided by D281, F315, L316, and E318. A glycan (N-linked (GlcNAc...) asparagine) is linked at N329. Residue S383 is modified to Phosphoserine. N-linked (GlcNAc...) asparagine glycosylation is found at N510, N520, and N574. 2 disulfide bridges follow: C568-C664 and C671-C683.

In terms of assembly, disulfide-linked heterodimer composed of the catalytic light subunit SLC7A9 and the heavy subunit SLC3A1. The heterodimer is the minimal functional unit. Assembles in non-covalently linked heterotetramers (dimers of heterodimers) and higher order oligomers; the oligomerization is mediated by SLC3A1 likely to prevent degradation in the endoplasmic reticulum and facilitate heteromer trafficking to the plasma membrane. Disulfide-linked heterodimer composed of the catalytic light subunit SLC7A13 and the heavy subunit SLC3A1. Predominantly expressed in kidney and intestine. In kidney localized to the apical membrane of the proximal tubules.

The protein resides in the cell membrane. It localises to the apical cell membrane. Acts as a chaperone that facilitates biogenesis and trafficking of functional transporter heteromers to the plasma membrane. Associates with SLC7A9 to form a functional transporter complex that mediates the electrogenic exchange between cationic amino acids and neutral amino acids, with a stoichiometry of 1:1. SLC7A9-SLC3A1 transporter has system b(0,+)-like activity with high affinity for extracellular cationic amino acids and L-cystine and lower affinity for intracellular neutral amino acids. Substrate exchange is driven by high concentration of intracellular neutral amino acids and the intracellular reduction of L-cystine to L-cysteine. SLC7A9-SLC3A1 acts as a major transporter for reabsorption of L-cystine and dibasic amino acids across the brush border membrane in early proximal tubules. Associates with SLC7A13 to form a functional complex that transports anionic and neutral amino acids via exchange or facilitated diffusion. SLC7A13-SLC3A1 may act as a major transporter for L-cystine in late proximal tubules, ensuring its reabsorption from the luminal fluid in exchange for cytosolic L-glutamate or L-aspartate. The polypeptide is Amino acid transporter heavy chain SLC3A1 (Slc3a1) (Rattus norvegicus (Rat)).